The chain runs to 449 residues: Protein CapK (449 aa).

The protein operates within capsule biogenesis; capsule polysaccharide biosynthesis. Functionally, required for the biosynthesis of type 1 capsular polysaccharide. This chain is Protein CapK (capK), found in Staphylococcus aureus.